Here is a 349-residue protein sequence, read N- to C-terminus: Isopentenyl-diphosphate delta-isomerase (349 aa).

Residue arginine 9–lysine 10 participates in substrate binding. FMN is bound by residues alanine 65–threonine 67, serine 95, and asparagine 124. A substrate-binding site is contributed by serine 95–histidine 97. Glutamine 154 contacts substrate. Position 155 (glutamate 155) interacts with Mg(2+). Residues lysine 186, serine 211, threonine 216, glycine 262–arginine 264, and serine 283–arginine 284 each bind FMN.

This sequence belongs to the IPP isomerase type 2 family. In terms of assembly, homooctamer. Dimer of tetramers. Requires FMN as cofactor. NADPH is required as a cofactor. The cofactor is Mg(2+).

The protein resides in the cytoplasm. It catalyses the reaction isopentenyl diphosphate = dimethylallyl diphosphate. Involved in the biosynthesis of isoprenoids. Catalyzes the 1,3-allylic rearrangement of the homoallylic substrate isopentenyl (IPP) to its allylic isomer, dimethylallyl diphosphate (DMAPP). In Staphylococcus haemolyticus (strain JCSC1435), this protein is Isopentenyl-diphosphate delta-isomerase.